The sequence spans 339 residues: Transcription initiation factor IIB (339 aa).

The TFIIB-type zinc-finger motif lies at Glu39–Gln70. Positions 43, 46, 62, and 65 each coordinate Zn(2+). 2 repeat units span residues Ser156–Leu239 and Asp250–Glu331.

It belongs to the TFIIB family.

Its function is as follows. Stabilizes TBP binding to an archaeal box-A promoter. Also responsible for recruiting RNA polymerase II to the pre-initiation complex (DNA-TBP-TFIIB). This Methanococcus maripaludis (strain C5 / ATCC BAA-1333) protein is Transcription initiation factor IIB.